Reading from the N-terminus, the 353-residue chain is MKFVLFAQLAAVAAPAIAIDLAVQAGQHVMYSYPGLTPPESLYKLTSEGKVGGLIIFKENVNSNLPAIMDKFQALYKASPAYNGHPMIITTDQEGGNVRRVPGGPSQSARQIGDSSTPMQAASQAGRDAAAALKAQKINGNLAPVLDIYREEGNFIDEFGRSFGNNTEIVTSCGSAFAISQSRSGVLSTVKHFPGLGAAKKGENTDLVPIKIDLSLDEIRTFDEVPYRTAIRNGVDLIMTSWAVYPSLDAKYPAGLSRKWTTDELRTRLGYKGVIITDAIEAGSLKSFGNDGQRGVLAAKAGVDILLASGRNATQGEAIVNEIVAALKKGTLSMTEFQESSKRIQALQSRLSA.

The first 18 residues, 1-18, serve as a signal peptide directing secretion; the sequence is MKFVLFAQLAAVAAPAIA. The segment at 94–119 is disordered; it reads EGGNVRRVPGGPSQSARQIGDSSTPM. The span at 105 to 119 shows a compositional bias: polar residues; sequence PSQSARQIGDSSTPM. N165 and N312 each carry an N-linked (GlcNAc...) asparagine glycan.

This sequence belongs to the glycosyl hydrolase 3 family.

Its subcellular location is the secreted. This is an uncharacterized protein from Arthroderma benhamiae (strain ATCC MYA-4681 / CBS 112371) (Trichophyton mentagrophytes).